A 100-amino-acid chain; its full sequence is Small ribosomal subunit protein uS14c (100 aa).

The protein belongs to the universal ribosomal protein uS14 family. Part of the 30S ribosomal subunit.

It localises to the plastid. The protein localises to the chloroplast. Binds 16S rRNA, required for the assembly of 30S particles. In Mesostigma viride (Green alga), this protein is Small ribosomal subunit protein uS14c.